The sequence spans 156 residues: MKSLQKGFTLIELMIVVAIIGILAAIAIPQYQNYIARSQVSRVMSETGQMRTAIETCVLDGKEAGECFIGWTGSNLLDGDFTAGTESTAAATGQAGITIKYPVAADDEGNIVATFGRNAAAAIKPQTLTWSRSKEGTWTCATTVEAKFQPTGCKDK.

The propeptide at 1 to 7 is leader sequence; sequence MKSLQKG. Phenylalanine 8 carries the N-methylphenylalanine modification. The helical transmembrane segment at 8–28 threads the bilayer; it reads FTLIELMIVVAIIGILAAIAI. Intrachain disulfides connect cysteine 57-cysteine 67 and cysteine 140-cysteine 153.

The protein belongs to the N-Me-Phe pilin family. As to quaternary structure, the pili are polar flexible filaments of about 5.4 nanometers diameter and 2.5 micrometers average length; they consist of only a single polypeptide chain arranged in a helical configuration of five subunits per turn in the assembled pilus.

It localises to the fimbrium. The protein resides in the membrane. Major component of the type IV fimbriae that plays an essential role in twitching motility, natural transformation, and protease secretion. The protein is Type IV major fimbrial protein FimA (fimA) of Dichelobacter nodosus (Bacteroides nodosus).